A 586-amino-acid polypeptide reads, in one-letter code: Homothallic switching endonuclease (586 aa).

Residues 215–370 enclose the DOD-type homing endonuclease domain; the sequence is MLGLWLGDST…IVHISRSLGM (156 aa).

In terms of processing, rapidly degraded via the ubiquitin-26S proteasome system through two ubiquitin-conjugating enzymes UBC2/RAD6 and UBC3/CDC34.

The protein localises to the nucleus. Functionally, initiation of mating type interconversion. This protein is a site-specific endonuclease that cleaves a site in the mat locus on chromosome III. The double-strand break is followed by a unidirectional gene conversion event that replaces the information at the mat locus by information copied from either of the two homologous loci (HMR and HML) that reside at the extremity of the chromosome III. Endonuclease expression takes place in late G1 just before cells enter S phase. The protein is Homothallic switching endonuclease (HO) of Saccharomyces cerevisiae (strain ATCC 204508 / S288c) (Baker's yeast).